Consider the following 20-residue polypeptide: Maximin-Ht (20 aa).

The protein belongs to the bombinin family. As to expression, expressed by the skin glands.

The protein localises to the secreted. In terms of biological role, has antimicrobial activity. The chain is Maximin-Ht from Bombina maxima (Giant fire-bellied toad).